Consider the following 406-residue polypeptide: Argininosuccinate synthase (406 aa).

ATP is bound by residues 11–19 (AYSGGLDTS) and A38. L-citrulline-binding residues include Y91 and S96. An ATP-binding site is contributed by G121. L-aspartate is bound by residues T123, N127, and D128. N127 is a binding site for L-citrulline. R131, S181, S190, E266, and Y278 together coordinate L-citrulline.

The protein belongs to the argininosuccinate synthase family. Type 1 subfamily. Homotetramer.

It is found in the cytoplasm. It catalyses the reaction L-citrulline + L-aspartate + ATP = 2-(N(omega)-L-arginino)succinate + AMP + diphosphate + H(+). Its pathway is amino-acid biosynthesis; L-arginine biosynthesis; L-arginine from L-ornithine and carbamoyl phosphate: step 2/3. In Campylobacter jejuni subsp. doylei (strain ATCC BAA-1458 / RM4099 / 269.97), this protein is Argininosuccinate synthase.